Here is a 91-residue protein sequence, read N- to C-terminus: Large ribosomal subunit protein eL34 (91 aa).

Residues 48–71 (RGRPVEMRKLPKTKKRPERPYPHL) are disordered.

The protein belongs to the eukaryotic ribosomal protein eL34 family.

The sequence is that of Large ribosomal subunit protein eL34 (rpl34e) from Pyrococcus abyssi (strain GE5 / Orsay).